We begin with the raw amino-acid sequence, 266 residues long: Thymidylate synthase (266 aa).

Arginine 24 is a dUMP binding site. Histidine 54 provides a ligand contact to (6R)-5,10-methylene-5,6,7,8-tetrahydrofolate. Position 129–130 (129–130 (RR)) interacts with dUMP. Residue cysteine 149 is the Nucleophile of the active site. DUMP contacts are provided by residues 169–172 (RSAD), asparagine 180, and 210–212 (HIY). Aspartate 172 lines the (6R)-5,10-methylene-5,6,7,8-tetrahydrofolate pocket. Alanine 265 provides a ligand contact to (6R)-5,10-methylene-5,6,7,8-tetrahydrofolate.

The protein belongs to the thymidylate synthase family. Bacterial-type ThyA subfamily. As to quaternary structure, homodimer.

The protein localises to the cytoplasm. The catalysed reaction is dUMP + (6R)-5,10-methylene-5,6,7,8-tetrahydrofolate = 7,8-dihydrofolate + dTMP. It functions in the pathway pyrimidine metabolism; dTTP biosynthesis. Catalyzes the reductive methylation of 2'-deoxyuridine-5'-monophosphate (dUMP) to 2'-deoxythymidine-5'-monophosphate (dTMP) while utilizing 5,10-methylenetetrahydrofolate (mTHF) as the methyl donor and reductant in the reaction, yielding dihydrofolate (DHF) as a by-product. This enzymatic reaction provides an intracellular de novo source of dTMP, an essential precursor for DNA biosynthesis. The polypeptide is Thymidylate synthase (Mycobacterium sp. (strain KMS)).